The sequence spans 3425 residues: MSNKKPGRPGSGRVVNMLKRGTSRGNPLARIKRTIDGVLRGAGPIRFVLALLTFFKFTALRPTIGMLKRWKLVGVNEATKHLKSFKRDIGQMLDGLNKRKAKRRGGSCSWIIMLLPIVAGLKLGNYNGRVLATLNKTDVSDLLVIPITAGSNGCVVRALDVGLMCQDDITYLCPKLEYGYEPEDIDCWCNETEIYIHYGRCTPSRHGRRSRRSVNVHHHGESLLEAKNTPWMDSTKATKYLTKVENWALRNPGYALAAIFIGWNLGTTRSQKIIFTIMLMLIAPAYSFSCLGMQNRDFVEGVNGVEWIDVVLEGGPCVTITAKDRPTIDVKMMNMEATELAVVRSYCYEPRVSDVTTESRCPTMGEAHNPKATYAEYICKKDFVDRGWGNGCGLFGKGSIQTCAKFDCTKKAEGRIVQKENVQFEVAVFIHGSTEASTYHNYSAQQSLKHAARFVITPKSPVYTAEMEDYGTVTLECEPRSGVDMGQFYVFTMNTKSWLVNRDWFHDLNLPWTGSSAGTWQNKESLIEFEEAHATKQSVVALASQEGALHAALAGAIPVKYSGSKLEMTSGHLKCRVKMQGLKLKGMTYPMCSNTFSLVKNPTDTGHGTVVVELSYAGTDGPCRVPISMSADLNDMTPVGRLITVNPYVSTSSTGAKIMVEVEPPFGDSFILVGSGKGQIRYQWHRSGSTIGKAFTSTLKGAQRMVALGDTAWDFGSVGGVLTSIGKGIHQVFGSAFKSLFGGMSWTTQGMLGALLLWMGLNARDRSISMTFLAVGGILVFLAVNVNADTGCSIDLARKELKCGQGMFVFNDVEAWKDNYKYYPSTPRRLAKVVAEAHEAGICGIRSVSRLEHNMWVSIKHELNAILEDNAIDLTVVVEENPGRYGKTNQRLPNVDGELMYGWKKWGKSIFSSPKMSNNTFVIDGPKTKEYPDERRAWNSMKIEDFGFGVLSTKVWMEMRTENTTDCDTAVMGTAIKGNRAVHSDLSYWIESKNNGSWKLERAVLGEVKSCTWPETHTLWSDSVVESELIIPKTLGGPKSHHNTRTGYKVQSSGPWDEKEIVIDFDYCPGTTVTVTSSCRDRGPSARTTTASGKLITDWCCRSCTAPPLRFVTKSGCWYGMEIRPTAHGDDMLIKSKVMAFQGGGMEPMQLGMLVMIVAAQEILRRRMTAPIAWSALLLLMALVLFGGITYSDLVKYVILVAAAFAESNTGGDIVHLAMVAAFNIQPGLLIGFLLRRKWSNQESRLLGVALALITVAMRDLNMSIPTLLNSGAMAWLLLRAVFEGTVSSFALPLVSLLAPGLRIVGIDVVRIGVLTLGILSLLKERSNAMAKKKGGMLLGVACATAGIASPLVFAGLHMVLKPVTRRGWPVSEALTAVGLTFALAGGIAQFDDSSMAIPLAVGGIMLVVAVVTGFSTDLWLEKASDISWSEEARVTGASQRFDVEIDQDGNMRLLNDPGVSLGVWAFRTGLILLSSYNPYFLPLTLAGYWMTTKAKQRGGVIWDVPAPKERKRAEVGNGVFRIMARGLLGKYQAGVGVMHEGVFHTMWHVTNGAVIQAGEGTLVPYWASVRNDLISYGGPWKLGKQWNGVDEVQVIVVQPGKEVINVQTQPGIFKTQYGEVGAVSLDYPTGTSGSPIIDKEGQVVGLYGNGILVGSGDFVSMITQGEKKEEEVPQVFDENMLRKRQLTVLDLHPGSGKTRKVLPMILKSAIDKRLRTAVLAPTRVVAAEIAEALKGLPIRYLTPAVKREHTGTEIIDVMCHATLTARLLTPQRVPNYNLFIMDEAHFTDPASIAARGYISTKVELGEAAAIFMTATPPGTTEAFPDSNSPITDIEEQIPDRAWNSGYEWITDFQGKTVWFVPSVKSGNEIAVCLTKAGKKVIQLNRKSFDSEYPKCKSGEWDFVITTDISEMGANFGAQRVIDSRKCIKPVIIEDGEGSVQMNGPVPITSASAAQRRGRVGRDVTQIGDEYHYSGPTSEDDHDFAHWKEAKILLDNINMPDGLVAQLYGPERDKVDAIDGEFRLRTEQRKHFVEYLRTGDLPVWISYKVAEAGISYNDRRWCFDGPLCNTVLEDNNPVELWTKSGEKKILKPRWRDGRLWADHQALKAFKDFASGKRSAIGILEVFRMLPDHFAHRMTESMDNIYMLTTAEKGSRAHREALEELPETLETFLLVFMMTVASMGVFLFFVQRRGLGKTGLGAMVMATVTVLLWIAEVPAQKIAGVLLVSLLLMIVLIPEPERQRSQTDSHLAVFMIVVLLVVGAVASNEMGWLEQTKKDLSALFGRKSDSHQETWSMPWPDLRPATAWAAYAGATTFLTPLLKHLIITEYVNFSLMAMTAQAGALFGLGKGMPFVKADLSVPLLLLGCWGQFTMTTTVSAVMMVILHYAFLVPGWQAEAMRSAQRRTAAGVMKNPVVDGIVATDVPDLEASTPITEKKLGQCVLVGIALVAVFLTPNTLTLTEFGMLTSAASVTLIEGAAGRIWNATTAVAMCHLLRKNWLAGASLAWTITRNLQAGTLRRGGGTGRTLGEAWKAQLNQLTRQEFMEYRKDGIIEVDRAAAKRARREGNVTGGHPVSRGTAKLRWLVERGFLKPRGKVVDLGCGRGGWSYYCATLKQVQEVRGYTKGGPGHEEPVMTQSYGWNIVTLKSGVNVHFKPTEPSDTLLCDIGEASPVPEIESARTIRVLQMAEEWLARGVEEFCIKVLCPYMPAVIKELERLQLKWGGGLVRVPLSRNSTHEMYWVSGSSGNVTNSINTVSQMLINRMHKTNRNGPRYEEDVDLGSGTRAVSCTRQRTDWGMVADRVKNLAREYAPSWHYDQDNPYKTWNYHGSYEVKATGSASSMVNGVVRILSKPWDTLQNVVNMAMTDTTPFGQQRVFKEKVDTKAPEPPAGTARVMNIVARWMWNFVGRNKQPRMCTKEEFIEKVNSNAALGAMFEEQHKWASAREAVEDPEFWSLVDRERELHLQGKCETCIYNMMGKREKKMGEFGKAKGSRAIWYMWLGARFLEFEALGFLNEDHWMSRENTKGGVEGLGLQKLGYVLRDISAKEGGLMYADDTAGWDTRITKADLENEAIILEKMEPMHRAVAEPLIKFAYMNKVVKVMRPGRDGKTVMDVISREDQRGSGQVVTYALNTFTNLCVQLIRCMEGEELLLPEETERLKKGKEKRIQEWLQKNGENRLSAMAVSGDDCVVKPADDRFATALHFLNSMSKVRKDTQEWKPSTGWRNWQEVPFCSHHFHELQMKDGRKIVVPCRDQDELIGRARLSPGSGWSLTETARLSKAYAQMWLLMYFHRRDLRLMANAICSSVPVSWVPTGRTTWSIHGKGEWMTSEDMLAVWNRVWIEENEHMEDKTPVTSWNEVPYLGKREDGWCGSLIGHRARSTWAENIYTPIMQIRALIGPEHYVDYMPTLNRFKPIESWSEGVL.

The interaction with host EXOC1 stretch occupies residues 3–16 (NKKPGRPGSGRVVN). The segment at 38-73 (VLRGAGPIRFVLALLTFFKFTALRPTIGMLKRWKLV) is hydrophobic; homodimerization of capsid protein C. The propeptide at 105 to 120 (GGSCSWIIMLLPIVAG) is ER anchor for the capsid protein C, removed in mature form by serine protease NS3. The helical transmembrane segment at 105-125 (GGSCSWIIMLLPIVAGLKLGN) threads the bilayer. N135 is a glycosylation site (N-linked (GlcNAc...) asparagine; by host). 2 helical membrane passes run 247–267 (WALRNPGYALAAIFIGWNLGT) and 273–293 (IIFTIMLMLIAPAYSFSCLGM). Cystine bridges form between C290–C317, C347–C403, C361–C392, C379–C408, C477–C575, and C592–C623. Residues 385–398 (DRGWGNGCGLFGKG) form a fusion peptide region. 2 consecutive transmembrane segments (helical) span residues 740–760 (LFGGMSWTTQGMLGALLLWMG) and 768–788 (ISMTFLAVGGILVFLAVNVNA). C792 and C803 are joined by a disulfide. 3 N-linked (GlcNAc...) asparagine; by host glycosylation sites follow: N918, N963, and N995. Disulfide bonds link C967–C1011, C1068–C1117, C1079–C1100, and C1101–C1104. Helical transmembrane passes span 1138-1158 (VMAFQGGGMEPMQLGMLVMIV), 1169-1189 (TAPIAWSALLLLMALVLFGGI), 1214-1234 (IVHLAMVAAFNIQPGLLIGFL), 1290-1310 (FALPLVSLLAPGLRIVGIDVV), 1337-1357 (MLLGVACATAGIASPLVFAGL), 1369-1389 (WPVSEALTAVGLTFALAGGIA), and 1395-1415 (SMAIPLAVGGIMLVVAVVTGF). Positions 1421 to 1460 (LEKASDISWSEEARVTGASQRFDVEIDQDGNMRLLNDPGV) are interacts with and activates NS3 protease. One can recognise a Peptidase S7 domain in the interval 1499 to 1676 (GGVIWDVPAP…EKKEEEVPQV (178 aa)). Catalysis depends on charge relay system; for serine protease NS3 activity residues H1549, D1573, and S1633. The region spanning 1679–1835 (ENMLRKRQLT…DSNSPITDIE (157 aa)) is the Helicase ATP-binding domain. The important for RNA-binding stretch occupies residues 1683-1686 (RKRQ). 1692–1699 (LHPGSGKT) serves as a coordination point for ATP. The DEAH box motif lies at 1783 to 1786 (DEAH). The Helicase C-terminal domain maps to 1845–2011 (SGYEWITDFQ…GLVAQLYGPE (167 aa)). A regulates the ATPase activity of NS3 helicase region spans residues 2162-2166 (EELPE). 8 helical membrane-spanning segments follow: residues 2169 to 2189 (ETFLLVFMMTVASMGVFLFFV), 2194 to 2214 (LGKTGLGAMVMATVTVLLWIA), 2216 to 2236 (VPAQKIAGVLLVSLLLMIVLI), 2252 to 2272 (VFMIVVLLVVGAVASNEMGWL), 2306 to 2326 (AWAAYAGATTFLTPLLKHLII), 2334 to 2354 (LMAMTAQAGALFGLGKGMPFV), 2371 to 2391 (FTMTTTVSAVMMVILHYAFLV), and 2441 to 2461 (CVLVGIALVAVFLTPNTLTLT). The mRNA cap 0-1 NS5-type MT domain maps to 2521 to 2786 (GGGTGRTLGE…DVDLGSGTRA (266 aa)). S2576 serves as a coordination point for S-adenosyl-L-methionine. Residue S2576 is modified to Phosphoserine. Catalysis depends on K2581, which acts as the For 2'-O-MTase activity. S-adenosyl-L-methionine contacts are provided by G2606, W2607, T2624, K2625, and V2652. D2666 (for 2'-O-MTase activity) is an active-site residue. I2667 serves as a coordination point for S-adenosyl-L-methionine. Catalysis depends on for 2'-O-MTase activity residues K2702 and E2738. S-adenosyl-L-methionine is bound at residue Y2740. Residues E2960, H2964, C2969, and C2972 each contribute to the Zn(2+) site. One can recognise a RdRp catalytic domain in the interval 3050-3202 (GLMYADDTAG…KPADDRFATA (153 aa)). Zn(2+) is bound by residues H3237, C3253, and C3372. A PDZ-binding motif is present at residues 3423-3425 (GVL).

In the N-terminal section; belongs to the class I-like SAM-binding methyltransferase superfamily. mRNA cap 0-1 NS5-type methyltransferase family. Homodimer. As to quaternary structure, forms heterodimers with envelope protein E in the endoplasmic reticulum and Golgi. In terms of assembly, homodimer; in the endoplasmic reticulum and Golgi. Interacts with protein prM. Interacts with non-structural protein 1. Homodimer; Homohexamer when secreted. Interacts with envelope protein E. NS1 interacts with NS4B. Interacts with host MAVS (via C-terminus); this interaction blocks the interaction of MAVS with RIGI or IFIH1/MDA5. As to quaternary structure, interacts (via N-terminus) with serine protease NS3. In terms of assembly, forms a heterodimer with serine protease NS3. May form homooligomers. Forms a heterodimer with NS2B. Interacts with non-structural protein 2A (via N-terminus). Interacts with NS4B. Interacts with unphosphorylated RNA-directed RNA polymerase NS5; this interaction stimulates RNA-directed RNA polymerase NS5 guanylyltransferase activity. As to quaternary structure, interacts with serine protease NS3. In terms of assembly, homodimer. Post-translationally, specific enzymatic cleavages in vivo yield mature proteins. Cleavages in the lumen of endoplasmic reticulum are performed by host signal peptidase, whereas cleavages in the cytoplasmic side are performed by serine protease NS3. Signal cleavage at the 2K-4B site requires a prior NS3 protease-mediated cleavage at the 4A-2K site. Both NS2A and NS2B proteins are required in cis for NS2A/2B proteolytic processing. Cleaved in post-Golgi vesicles by a host furin, releasing the mature small envelope protein M, and peptide pr. This cleavage is incomplete as up to 30% of viral particles still carry uncleaved prM. In terms of processing, N-glycosylated. Post-translationally, N-glycosylated. The excreted form is glycosylated and this is required for efficient secretion of the protein from infected cells. Phosphorylated on serines residues. This phosphorylation may trigger NS5 nuclear localization.

The protein localises to the virion. Its subcellular location is the host nucleus. It localises to the host cytoplasm. The protein resides in the host perinuclear region. It is found in the secreted. The protein localises to the virion membrane. Its subcellular location is the host endoplasmic reticulum membrane. It carries out the reaction Selective hydrolysis of -Xaa-Xaa-|-Yaa- bonds in which each of the Xaa can be either Arg or Lys and Yaa can be either Ser or Ala.. The catalysed reaction is RNA(n) + a ribonucleoside 5'-triphosphate = RNA(n+1) + diphosphate. It catalyses the reaction a ribonucleoside 5'-triphosphate + H2O = a ribonucleoside 5'-diphosphate + phosphate + H(+). The enzyme catalyses ATP + H2O = ADP + phosphate + H(+). It carries out the reaction a 5'-end (5'-triphosphoguanosine)-ribonucleoside in mRNA + S-adenosyl-L-methionine = a 5'-end (N(7)-methyl 5'-triphosphoguanosine)-ribonucleoside in mRNA + S-adenosyl-L-homocysteine. The catalysed reaction is a 5'-end (N(7)-methyl 5'-triphosphoguanosine)-ribonucleoside in mRNA + S-adenosyl-L-methionine = a 5'-end (N(7)-methyl 5'-triphosphoguanosine)-(2'-O-methyl-ribonucleoside) in mRNA + S-adenosyl-L-homocysteine + H(+). Capsid protein self-assembles to form an icosahedral capsid about 40 nm in diameter. Plays a role in virus budding by binding to the cell membrane and gathering the viral RNA into a nucleocapsid that forms the core of a mature virus particle. Its function is as follows. Prevents premature fusion activity of envelope proteins in trans-Golgi by binding to envelope protein E at pH6.0. After virion release in extracellular space, gets dissociated from E dimers. Functionally, acts as a chaperone for envelope protein E during intracellular virion assembly by masking and inactivating envelope protein E fusion peptide. prM is the only viral peptide matured by host furin in the trans-Golgi network probably to avoid catastrophic activation of the viral fusion activity in acidic Golgi compartment prior to virion release. prM-E cleavage is inefficient, and many virions are only partially matured. These uncleaved prM would play a role in immune evasion. In terms of biological role, may play a role in virus budding. Exerts cytotoxic effects by activating a mitochondrial apoptotic pathway through M ectodomain. May display a viroporin activity. Binds to host cell surface receptor and mediates fusion between viral and cellular membranes. Envelope protein is synthesized in the endoplasmic reticulum in the form of heterodimer with protein prM. They play a role in virion budding in the ER, and the newly formed immature particle is covered with 60 spikes composed of heterodimer between precursor prM and envelope protein E. The virion is transported to the Golgi apparatus where the low pH causes dissociation of PrM-E heterodimers and formation of E homodimers. Its function is as follows. Involved in immune evasion, pathogenesis and viral replication. Interacts with host MAVS and blocks MAVS binding to RIGI or IFIH1/MDA5, thereby leading to evasion of the innate immune response. Once cleaved off the polyprotein, is targeted to three destinations: the viral replication cycle, the plasma membrane and the extracellular compartment. Essential for viral replication. Required for formation of the replication complex and recruitment of other non-structural proteins to the ER-derived membrane structures. Excreted as a hexameric lipoparticle that plays a role against host immune response. Functionally, component of the viral RNA replication complex that functions in virion assembly. In terms of biological role, required cofactor for the serine protease function of NS3. May have membrane-destabilizing activity and form viroporins. Displays three enzymatic activities: serine protease, NTPase and RNA helicase. NS3 serine protease, in association with NS2B, performs its autocleavage and cleaves the polyprotein at dibasic sites in the cytoplasm: C-prM, NS2A-NS2B, NS2B-NS3, NS3-NS4A, NS4A-2K and NS4B-NS5. NS3 RNA helicase binds RNA and unwinds dsRNA in the 3' to 5' direction. Its function is as follows. Regulates the ATPase activity of the NS3 helicase activity. NS4A allows NS3 helicase to conserve energy during unwinding. Functionally, functions as a signal peptide for NS4B. In terms of biological role, induces the formation of ER-derived membrane vesicles where the viral replication takes place. Replicates the viral (+) and (-) RNA genome, and performs the capping of genomes in the cytoplasm. NS5 methylates viral RNA cap at guanine N-7 and ribose 2'-O positions. This Anas (ducks) protein is Genome polyprotein.